The primary structure comprises 94 residues: METVLILCSLLAPVVLASAAEKEKEKDPFYYDYQTLRIGGLVFAVVLFSVGILLILSRRCKCSFNQKPRAPGDEEAQVENLITTNAAEPQKAEN.

The N-terminal stretch at 1 to 17 (METVLILCSLLAPVVLA) is a signal peptide. Residues 18–34 (SAAEKEKEKDPFYYDYQ) are Extracellular-facing. Residues 35–57 (TLRIGGLVFAVVLFSVGILLILS) traverse the membrane as a helical segment. Residues 58–94 (RRCKCSFNQKPRAPGDEEAQVENLITTNAAEPQKAEN) lie on the Cytoplasmic side of the membrane.

This sequence belongs to the FXYD family. In terms of assembly, regulatory subunit of the sodium/potassium-transporting ATPase which is composed of a catalytic alpha subunit, a non-catalytic beta subunit and an additional regulatory subunit. The regulatory subunit, a member of the FXYD protein family, modulates the enzymatic activity in a tissue- and isoform-specific way by changing affinities of the Na+/K+-ATPase toward Na(+), K(+) or ATP. In terms of tissue distribution, expressed in the neuronal fibers of the medial part of lateral habenula nucleus, thalamus, hypothalamus, stria terminalis, zona incerta, amygdaloid body and cingulum, olfactory bulb, hippocampus, cerebral cortex and cerebellum. In the cerebellum there is a predominant expression pattern in the granule layer of lobules VI-IX of the posterior lobe. Detected in inner ear.

It is found in the cell membrane. In terms of biological role, associates with and regulates the activity of the sodium/potassium-transporting ATPase (NKA) which catalyzes the hydrolysis of ATP coupled with the exchange of Na(+) and K(+) ions across the plasma membrane. Decreases the apparent affinity of the transporter for Na(+). In addition to modulating NKA kinetics, may also function as a regulator of NKA localization to the plasma membrane. This is FXYD domain-containing ion transport regulator 6 (Fxyd6) from Rattus norvegicus (Rat).